A 268-amino-acid polypeptide reads, in one-letter code: Tetraspanin-5 (268 aa).

Residues 1–17 are Cytoplasmic-facing; that stretch reads MSGKHYKGPEVSCCIKY. Residues 18–38 traverse the membrane as a helical segment; sequence FIFGFNVIFWFLGITFLGIGL. Over 39–61 the chain is Extracellular; the sequence is WAWNEKGVLSNISSITDLGGFDP. An N-linked (GlcNAc...) asparagine glycan is attached at N49. Residues 62–82 traverse the membrane as a helical segment; sequence VWLFLVVGGVMFILGFAGCIG. Topologically, residues 83–92 are cytoplasmic; it reads ALRENTFLLK. A helical membrane pass occupies residues 93-113; that stretch reads FFSVFLGIIFFLELTAGVLAF. Residues 114–232 lie on the Extracellular side of the membrane; that stretch reads VFKDWIKDQL…PQFEKWLQDN (119 aa). Intrachain disulfides connect C153/C221, C154/C186, C170/C180, and C187/C200. 2 N-linked (GlcNAc...) asparagine glycosylation sites follow: N169 and N174. N232 is a glycosylation site (N-linked (GlcNAc...) asparagine). The chain crosses the membrane as a helical span at residues 233-253; that stretch reads LTIVAGIFIGIALLQIFGICL. Over 254–268 the chain is Cytoplasmic; sequence AQNLVSDIEAVRASW.

Belongs to the tetraspanin (TM4SF) family. As to quaternary structure, interacts with ADAM10; the interaction influences ADAM10 substrate specificity, endocytosis and turnover. Palmitoylated.

The protein localises to the cell membrane. Its function is as follows. Part of TspanC8 subgroup, composed of 6 members that interact with the transmembrane metalloprotease ADAM10. This interaction is required for ADAM10 exit from the endoplasmic reticulum and for enzymatic maturation and trafficking to the cell surface as well as substrate specificity. Different TspanC8/ADAM10 complexes have distinct substrates. Promotes ADAM10-mediated cleavage of CD44. Seems to regulate VE-cadherin expression in endothelial cells probably through interaction with ADAM10, promoting leukocyte transmigration. The polypeptide is Tetraspanin-5 (Homo sapiens (Human)).